The chain runs to 377 residues: Glutamate 5-kinase (377 aa).

ATP is bound at residue lysine 20. Substrate-binding residues include serine 60, aspartate 147, and asparagine 159. 179–180 is a binding site for ATP; the sequence is TD. One can recognise a PUA domain in the interval 285–363; it reads AGRLVIDDGA…DKVYQVLGEA (79 aa).

This sequence belongs to the glutamate 5-kinase family.

Its subcellular location is the cytoplasm. It catalyses the reaction L-glutamate + ATP = L-glutamyl 5-phosphate + ADP. It participates in amino-acid biosynthesis; L-proline biosynthesis; L-glutamate 5-semialdehyde from L-glutamate: step 1/2. Its function is as follows. Catalyzes the transfer of a phosphate group to glutamate to form L-glutamate 5-phosphate. This is Glutamate 5-kinase from Acinetobacter baumannii (strain AB307-0294).